The primary structure comprises 179 residues: Protein GrpE (179 aa).

The interval 1-23 is disordered; it reads MSEEIKEQNVQDAQNENLAPDSV.

It belongs to the GrpE family. Homodimer.

Its subcellular location is the cytoplasm. Participates actively in the response to hyperosmotic and heat shock by preventing the aggregation of stress-denatured proteins, in association with DnaK and GrpE. It is the nucleotide exchange factor for DnaK and may function as a thermosensor. Unfolded proteins bind initially to DnaJ; upon interaction with the DnaJ-bound protein, DnaK hydrolyzes its bound ATP, resulting in the formation of a stable complex. GrpE releases ADP from DnaK; ATP binding to DnaK triggers the release of the substrate protein, thus completing the reaction cycle. Several rounds of ATP-dependent interactions between DnaJ, DnaK and GrpE are required for fully efficient folding. The sequence is that of Protein GrpE from Campylobacter curvus (strain 525.92).